The sequence spans 98 residues: Peptide YY (98 aa).

The N-terminal stretch at 1-28 (MVAVRRPWPVTVAMLLILLACLGALVDA) is a signal peptide. Serine 41 carries the phosphoserine modification. Residue tyrosine 64 is modified to Tyrosine amide. Residues 68 to 98 (DVPAALFSKLLFTDDSDSENLPFRPEGLDQW) constitute a propeptide that is removed on maturation.

The protein belongs to the NPY family. In terms of processing, the peptide YY form is cleaved at Pro-30 by the prolyl endopeptidase FAP (seprase) activity (in vitro) to generate peptide YY(3-36).

It is found in the secreted. In terms of biological role, this gut peptide inhibits exocrine pancreatic secretion, has a vasoconstrictory action and inhibitis jejunal and colonic mobility. This chain is Peptide YY (Pyy), found in Mus musculus (Mouse).